The following is a 108-amino-acid chain: Iron-sulfur cluster assembly protein CyaY (108 aa).

Belongs to the frataxin family.

Involved in iron-sulfur (Fe-S) cluster assembly. May act as a regulator of Fe-S biogenesis. In Pseudomonas paraeruginosa (strain DSM 24068 / PA7) (Pseudomonas aeruginosa (strain PA7)), this protein is Iron-sulfur cluster assembly protein CyaY.